The sequence spans 127 residues: Protein NEGATIVE REGULATOR OF RESISTANCE (127 aa).

Disordered regions lie at residues 1–28 and 47–127; these read MDAT…VDEV and TRRL…RAPA. Residues 112-127 show a composition bias toward low complexity; that stretch reads PPSDAPATPRSARAPA.

The protein belongs to the NPR1-interactor family. In terms of assembly, interacts with NPR1/NH1. Interacts with NPR3/NH3.

Its subcellular location is the nucleus. Acts as a negative regulator of disease resistance. Acts on basal resistance, age-related resistance and resistance mediated by the LRR receptor kinase XA21. Plants over-expressing NRR display enhanced susceptibility to the bacterial blight Xanthomonas oryzae pv. oryzae (Xoo). Binds to and represses NPR1/NH1-mediated transcriptional activation of LG2 in vitro. The sequence is that of Protein NEGATIVE REGULATOR OF RESISTANCE from Oryza sativa subsp. japonica (Rice).